The sequence spans 455 residues: Killer cell immunoglobulin-like receptor 3DL2 (455 aa).

A signal peptide spans 1-21 (MSLTVVSMACVGFFLLQGAWP). Topologically, residues 22–340 (LMGGQDKPFL…SKSGICRHLH (319 aa)) are extracellular. 3 Ig-like C2-type domains span residues 42–102 (GGHV…RPHS), 137–202 (GETV…VPHS), and 237–300 (GENV…FRAL). 2 cysteine pairs are disulfide-bonded: Cys-49–Cys-95 and Cys-144–Cys-195. Asn-179, Asn-239, Asn-273, and Asn-306 each carry an N-linked (GlcNAc...) asparagine glycan. Cys-244 and Cys-293 are oxidised to a cystine. A helical transmembrane segment spans residues 341–360 (VLIGTSVVIFLFILLLFFLL). Topologically, residues 361–455 (YRWCSNKKNA…APQSGLEGVF (95 aa)) are cytoplasmic.

This sequence belongs to the immunoglobulin superfamily. In terms of assembly, interacts with peptide-free HLA-F open conformer. As to expression, expressed in astrocytes.

It is found in the cell membrane. Receptor on natural killer (NK) cells and T cells for MHC class I molecules. Upon binding of peptide-free HLA-F open conformer, negatively regulates NK and T cell effector functions. Acts as a receptor on astrocytes for HLA-F. Through interaction with HLA-F, may protect motor neurons from astrocyte-induced toxicity. This chain is Killer cell immunoglobulin-like receptor 3DL2, found in Homo sapiens (Human).